The primary structure comprises 208 residues: 2-phospho-L-lactate guanylyltransferase (208 aa).

The protein belongs to the CofC family. Homodimer.

The catalysed reaction is (2S)-2-phospholactate + GTP + H(+) = (2S)-lactyl-2-diphospho-5'-guanosine + diphosphate. Its pathway is cofactor biosynthesis; coenzyme F420 biosynthesis. In terms of biological role, guanylyltransferase that catalyzes the activation of (2S)-2-phospholactate (2-PL) as (2S)-lactyl-2-diphospho-5'-guanosine, via the condensation of 2-PL with GTP. It is involved in the biosynthesis of coenzyme F420, a hydride carrier cofactor. This is 2-phospho-L-lactate guanylyltransferase from Haloarcula marismortui (strain ATCC 43049 / DSM 3752 / JCM 8966 / VKM B-1809) (Halobacterium marismortui).